Here is a 111-residue protein sequence, read N- to C-terminus: uncharacterized protein (111 aa).

This is an uncharacterized protein from Aquifex aeolicus (strain VF5).